Here is a 334-residue protein sequence, read N- to C-terminus: Broad-range acid phosphatase DET1 (334 aa).

Histidine 32 functions as the Tele-phosphohistidine intermediate in the catalytic mechanism. Substrate contacts are provided by residues asparagine 38, 44 to 45, and arginine 108; that span reads NG. Glutamate 126 (proton donor/acceptor) is an active-site residue. Substrate is bound by residues 168–171 and 195–205; these read LNNT and RVKDEPRIREQ. The residue at position 248 (serine 248) is a Phosphoserine.

It belongs to the phosphoglycerate mutase family.

Its subcellular location is the cytoplasm. The protein localises to the nucleus. Its function is as follows. Metal-independent, broad-range acid phosphatase. Involved, either directly or indirectly, in the bidirectional transport of sterols between the endoplasmic reticulum and the plasma membrane. The polypeptide is Broad-range acid phosphatase DET1 (DET1) (Saccharomyces cerevisiae (strain ATCC 204508 / S288c) (Baker's yeast)).